The following is a 639-amino-acid chain: ATP-dependent zinc metalloprotease FtsH (639 aa).

The Cytoplasmic segment spans residues 1–4 (MNST). The chain crosses the membrane as a helical span at residues 5–25 (VKTIVFWVFILACCILLWQVF). Residues 26–104 (QRSSNTGKEQ…TVKDNSGSPW (79 aa)) are Periplasmic-facing. A helical transmembrane segment spans residues 105-125 (WSILIQFSPVLVLVALWFFMI). Topologically, residues 126-639 (RQMQSGGNKA…GLPEGSPSPA (514 aa)) are cytoplasmic. 196 to 203 (GPPGTGKT) lines the ATP pocket. Histidine 418 contacts Zn(2+). Glutamate 419 is an active-site residue. 2 residues coordinate Zn(2+): histidine 422 and aspartate 494. Residues 597–639 (KDLPPLKPSGGSGTATTDDVQQVLKPSSDRGAGGLPEGSPSPA) form a disordered region.

It in the central section; belongs to the AAA ATPase family. This sequence in the C-terminal section; belongs to the peptidase M41 family. As to quaternary structure, homohexamer. Requires Zn(2+) as cofactor.

The protein localises to the cell inner membrane. Its function is as follows. Acts as a processive, ATP-dependent zinc metallopeptidase for both cytoplasmic and membrane proteins. Plays a role in the quality control of integral membrane proteins. This chain is ATP-dependent zinc metalloprotease FtsH, found in Acidobacterium capsulatum (strain ATCC 51196 / DSM 11244 / BCRC 80197 / JCM 7670 / NBRC 15755 / NCIMB 13165 / 161).